The primary structure comprises 274 residues: tRNA pseudouridine synthase A (274 aa).

The active-site Nucleophile is the aspartate 51. Residue tyrosine 109 coordinates substrate.

It belongs to the tRNA pseudouridine synthase TruA family. Homodimer.

It carries out the reaction uridine(38/39/40) in tRNA = pseudouridine(38/39/40) in tRNA. Functionally, formation of pseudouridine at positions 38, 39 and 40 in the anticodon stem and loop of transfer RNAs. This is tRNA pseudouridine synthase A from Acidovorax sp. (strain JS42).